The following is a 1119-amino-acid chain: DISARM protein DrmA (1119 aa).

A disordered region spans residues 73–95 (PESGMEEDVEQQRNSELEQEAEE). In terms of domain architecture, Helicase C-terminal spans 813 to 986 (ELSKYIDPYR…ATPYASRARD (174 aa)).

This sequence belongs to the helicase family.

It is found in the cytoplasm. Its function is as follows. Component of antiviral defense system DISARM (defense island system associated with restriction-modification), composed of DrmE, DrmA, DrmB, DrmC and DrmMII. DISARM is probably a multi-gene restriction module, this subunit is probably a helicase. Expression of DISARM in B.subtilis (strain BEST7003) confers resistance to phages Nf, phi29, phi105, phi3T, SPO1, SPR and SPP1. Protection is over 10(7)-fold against phi3T, 10(4)-10(5)-fold against Nf, phi29, phi105 and SPR, 100-fold against SPO1 and 10-fold against SPP1. DISARM does not interfere with phage adsorption, but instead interferes with (phi3T) DNA replication early in its cycle, preventing replication, circularization and lysogeny and probably causes phage DNA degradation (DNA is degraded in SPP1-infected cells). The protein is DISARM protein DrmA of Bacillus paralicheniformis (strain ATCC 9945a / NCIMB 11709 / CD-2).